We begin with the raw amino-acid sequence, 92 residues long: UPF0223 protein Sez_0908 (92 aa).

The protein belongs to the UPF0223 family.

The sequence is that of UPF0223 protein Sez_0908 from Streptococcus equi subsp. zooepidemicus (strain MGCS10565).